The following is a 550-amino-acid chain: Chaperonin GroEL (550 aa).

Residues 30 to 33, K51, 87 to 91, G415, 479 to 481, and D495 each bind ATP; these read TLGP, DGTTT, and NAA.

The protein belongs to the chaperonin (HSP60) family. Forms a cylinder of 14 subunits composed of two heptameric rings stacked back-to-back. Interacts with the co-chaperonin GroES.

It is found in the cytoplasm. The enzyme catalyses ATP + H2O + a folded polypeptide = ADP + phosphate + an unfolded polypeptide.. Its function is as follows. Together with its co-chaperonin GroES, plays an essential role in assisting protein folding. The GroEL-GroES system forms a nano-cage that allows encapsulation of the non-native substrate proteins and provides a physical environment optimized to promote and accelerate protein folding. The polypeptide is Chaperonin GroEL (Burkholderia mallei (strain NCTC 10247)).